A 38-amino-acid chain; its full sequence is Photosystem II reaction center protein L (38 aa).

Residues 17–37 form a helical membrane-spanning segment; that stretch reads SLYWGLLLIFVLAVLFSNYFF.

The protein belongs to the PsbL family. In terms of assembly, PSII is composed of 1 copy each of membrane proteins PsbA, PsbB, PsbC, PsbD, PsbE, PsbF, PsbH, PsbI, PsbJ, PsbK, PsbL, PsbM, PsbT, PsbX, PsbY, PsbZ, Psb30/Ycf12, at least 3 peripheral proteins of the oxygen-evolving complex and a large number of cofactors. It forms dimeric complexes.

Its subcellular location is the plastid. It localises to the chloroplast thylakoid membrane. One of the components of the core complex of photosystem II (PSII). PSII is a light-driven water:plastoquinone oxidoreductase that uses light energy to abstract electrons from H(2)O, generating O(2) and a proton gradient subsequently used for ATP formation. It consists of a core antenna complex that captures photons, and an electron transfer chain that converts photonic excitation into a charge separation. This subunit is found at the monomer-monomer interface and is required for correct PSII assembly and/or dimerization. This is Photosystem II reaction center protein L from Oenothera argillicola (Appalachian evening primrose).